We begin with the raw amino-acid sequence, 425 residues long: Glutamyl-tRNA reductase (425 aa).

Substrate is bound by residues Thr-49–Arg-52, Ser-107, Glu-112–Gln-114, and Gln-118. The active-site Nucleophile is the Cys-50. Residue Gly-187–Ile-192 participates in NADP(+) binding.

This sequence belongs to the glutamyl-tRNA reductase family. In terms of assembly, homodimer.

It catalyses the reaction (S)-4-amino-5-oxopentanoate + tRNA(Glu) + NADP(+) = L-glutamyl-tRNA(Glu) + NADPH + H(+). The protein operates within porphyrin-containing compound metabolism; protoporphyrin-IX biosynthesis; 5-aminolevulinate from L-glutamyl-tRNA(Glu): step 1/2. Its function is as follows. Catalyzes the NADPH-dependent reduction of glutamyl-tRNA(Glu) to glutamate 1-semialdehyde (GSA). This Pseudomonas savastanoi pv. phaseolicola (strain 1448A / Race 6) (Pseudomonas syringae pv. phaseolicola (strain 1448A / Race 6)) protein is Glutamyl-tRNA reductase.